Here is a 330-residue protein sequence, read N- to C-terminus: MKKSFIEKQQQISFVKSFFSRLLESKLGLIEVQGPILSCLGDGIQDNLSGHEKAVQVKVKTLPDSTFEVVHSLAKWKRRTLGRFGFQPEQGLYTHMKALRPDEDRLTPIHSVYVDQWDWEKVMEDGQRSLAYLKQTVGKIYEAIKETEKAVNKEFGLAPFLPDQIHFVHSETLLSRYPDLDAKGRERAIAKELGAVFLIGIGAKLSDGQSHDVRAPDYDDWTTPNSDGFVGLNGDIIVWNPVLEDAFEISSMGIRVDAEALERQLALTSDEERLQYDWHQALLKGDMPQSIGGGIGQSRLVMLLLQMKHIGQVQCSIWSPEVRETVEDML.

Belongs to the class-II aminoacyl-tRNA synthetase family. AsnA subfamily.

The protein resides in the cytoplasm. The enzyme catalyses L-aspartate + NH4(+) + ATP = L-asparagine + AMP + diphosphate + H(+). It functions in the pathway amino-acid biosynthesis; L-asparagine biosynthesis; L-asparagine from L-aspartate (ammonia route): step 1/1. The protein is Aspartate--ammonia ligase of Photorhabdus laumondii subsp. laumondii (strain DSM 15139 / CIP 105565 / TT01) (Photorhabdus luminescens subsp. laumondii).